The following is a 90-amino-acid chain: MVKTPLISVISQEEKEKNRGSVEFQVLCFTKKIDQISSHLKLHRKDYLSQRGLHKILGKRQRLLSYLSKKNRVRYKELINRLNIRESKTR.

This sequence belongs to the universal ribosomal protein uS15 family. Part of the 30S ribosomal subunit.

Its subcellular location is the plastid. It is found in the chloroplast. This Pelargonium hortorum (Common geranium) protein is Small ribosomal subunit protein uS15c (rps15-A).